The primary structure comprises 735 residues: Phosphoribosylformylglycinamidine synthase subunit PurL (735 aa).

His-49 is an active-site residue. Positions 52 and 91 each coordinate ATP. Mg(2+) is bound at residue Glu-93. Substrate contacts are provided by residues 94–97 (SHNH) and Arg-116. His-95 (proton acceptor) is an active-site residue. A Mg(2+)-binding site is contributed by Asp-117. Gln-240 contributes to the substrate binding site. Asp-268 contacts Mg(2+). 312–314 (ESQ) is a substrate binding site. Asp-493 and Gly-530 together coordinate ATP. Residue Asn-531 participates in Mg(2+) binding. Ser-533 lines the substrate pocket.

The protein belongs to the FGAMS family. In terms of assembly, monomer. Part of the FGAM synthase complex composed of 1 PurL, 1 PurQ and 2 PurS subunits.

The protein resides in the cytoplasm. It catalyses the reaction N(2)-formyl-N(1)-(5-phospho-beta-D-ribosyl)glycinamide + L-glutamine + ATP + H2O = 2-formamido-N(1)-(5-O-phospho-beta-D-ribosyl)acetamidine + L-glutamate + ADP + phosphate + H(+). The protein operates within purine metabolism; IMP biosynthesis via de novo pathway; 5-amino-1-(5-phospho-D-ribosyl)imidazole from N(2)-formyl-N(1)-(5-phospho-D-ribosyl)glycinamide: step 1/2. In terms of biological role, part of the phosphoribosylformylglycinamidine synthase complex involved in the purines biosynthetic pathway. Catalyzes the ATP-dependent conversion of formylglycinamide ribonucleotide (FGAR) and glutamine to yield formylglycinamidine ribonucleotide (FGAM) and glutamate. The FGAM synthase complex is composed of three subunits. PurQ produces an ammonia molecule by converting glutamine to glutamate. PurL transfers the ammonia molecule to FGAR to form FGAM in an ATP-dependent manner. PurS interacts with PurQ and PurL and is thought to assist in the transfer of the ammonia molecule from PurQ to PurL. The chain is Phosphoribosylformylglycinamidine synthase subunit PurL from Azorhizobium caulinodans (strain ATCC 43989 / DSM 5975 / JCM 20966 / LMG 6465 / NBRC 14845 / NCIMB 13405 / ORS 571).